Consider the following 459-residue polypeptide: Cysteine--tRNA ligase (459 aa).

Position 28 (Cys28) interacts with Zn(2+). Residues 30–40 (ITIYDYCHIGH) carry the 'HIGH' region motif. Residues Cys209, His234, and Glu238 each coordinate Zn(2+). The 'KMSKS' region signature appears at 266–270 (KMSKS). Lys269 contacts ATP.

It belongs to the class-I aminoacyl-tRNA synthetase family. In terms of assembly, monomer. It depends on Zn(2+) as a cofactor.

The protein resides in the cytoplasm. It carries out the reaction tRNA(Cys) + L-cysteine + ATP = L-cysteinyl-tRNA(Cys) + AMP + diphosphate. The protein is Cysteine--tRNA ligase of Pseudoalteromonas translucida (strain TAC 125).